The chain runs to 380 residues: Tryptophan--tRNA ligase (380 aa).

Residues 81-89 carry the 'HIGH' region motif; sequence PSLGMHIGH. Residues 253–257 carry the 'KMSKS' region motif; sequence KMSSS.

Belongs to the class-I aminoacyl-tRNA synthetase family.

The protein resides in the cytoplasm. The catalysed reaction is tRNA(Trp) + L-tryptophan + ATP = L-tryptophyl-tRNA(Trp) + AMP + diphosphate + H(+). This Saccharolobus solfataricus (strain ATCC 35092 / DSM 1617 / JCM 11322 / P2) (Sulfolobus solfataricus) protein is Tryptophan--tRNA ligase.